The primary structure comprises 122 residues: Histone H2B 1 (122 aa).

The disordered stretch occupies residues 1–30 (MPPKPSAKGAKKAAKTVTKPKDGKKRRHAR). O-linked (GlcNAc) serine glycosylation is present at Ser-109. Lys-117 is covalently cross-linked (Glycyl lysine isopeptide (Lys-Gly) (interchain with G-Cter in ubiquitin)).

It belongs to the histone H2B family. As to quaternary structure, the nucleosome is a histone octamer containing two molecules each of H2A, H2B, H3 and H4 assembled in one H3-H4 heterotetramer and two H2A-H2B heterodimers. The octamer wraps approximately 147 bp of DNA. In terms of processing, monoubiquitination of Lys-117 gives a specific tag for epigenetic transcriptional activation and is also prerequisite for histone H3 'Lys-4' and 'Lys-79' methylation. GlcNAcylation at Ser-109 promotes monoubiquitination of Lys-117. It fluctuates in response to extracellular glucose, and associates with transcribed genes.

Its subcellular location is the nucleus. It is found in the chromosome. Core component of nucleosome. Nucleosomes wrap and compact DNA into chromatin, limiting DNA accessibility to the cellular machineries which require DNA as a template. Histones thereby play a central role in transcription regulation, DNA repair, DNA replication and chromosomal stability. DNA accessibility is regulated via a complex set of post-translational modifications of histones, also called histone code, and nucleosome remodeling. This is Histone H2B 1 (his-11) from Caenorhabditis elegans.